Here is a 251-residue protein sequence, read N- to C-terminus: Gamma-glutamyl peptidase 4 (251 aa).

The Glutamine amidotransferase type-1 domain maps to 16-213; sequence SEFAKKTYGG…IDRVLAGGHI (198 aa). The Nucleophile role is filled by Cys100. Active-site residues include His192 and Glu194.

It belongs to the peptidase C26 family.

The protein resides in the cytoplasm. The protein localises to the cytosol. The protein operates within secondary metabolite biosynthesis. Its function is as follows. Involved in glucosinolate biosynthesis. Hydrolyzes the gamma-glutamyl peptide bond of several glutathione (GSH) conjugates to produce Cys-Gly conjugates related to glucosinolates. The gamma-Glu-Cys-Gly-GSH conjugates are the sulfur-donating molecule in glucosinolate biosynthesis. In Arabidopsis thaliana (Mouse-ear cress), this protein is Gamma-glutamyl peptidase 4.